Reading from the N-terminus, the 351-residue chain is Protein MGF 360-2L (351 aa).

The protein belongs to the asfivirus MGF 360 family.

In terms of biological role, plays a role in virus cell tropism, and may be required for efficient virus replication in macrophages. This chain is Protein MGF 360-2L, found in African swine fever virus (isolate Tick/South Africa/Pretoriuskop Pr4/1996) (ASFV).